A 334-amino-acid chain; its full sequence is Cytoskeleton protein RodZ (334 aa).

The Cytoplasmic segment spans residues 1-111; that stretch reads MNTEATHDQN…LGKRRKKRDG (111 aa). Residues 19 to 71 form the HTH cro/C1-type domain; sequence LRNAREQLGLSQQAVAERLCLKVSTVRDIEEDKAPSDLASTFLRGYIRSYARL. Positions 30–49 form a DNA-binding region, H-T-H motif; sequence QQAVAERLCLKVSTVRDIEE. The chain crosses the membrane as a helical; Signal-anchor for type II membrane protein span at residues 112-132; that stretch reads WLMSFTWLVLFVVVGLTGAWW. The Periplasmic portion of the chain corresponds to 133–334; the sequence is WQNHKAQQEE…TLNAEPTPAQ (202 aa). The disordered stretch occupies residues 154–241; sequence LNADKDSGQS…PSALPTSQAG (88 aa). Low complexity-rich tracts occupy residues 176–211 and 219–241; these read TTPA…TVVA and TAAT…SQAG.

The protein belongs to the RodZ family.

It localises to the cell inner membrane. Functionally, cytoskeletal protein that is involved in cell-shape control through regulation of the length of the long axis. This is Cytoskeleton protein RodZ from Salmonella choleraesuis (strain SC-B67).